Reading from the N-terminus, the 364-residue chain is MAQQTPLYEQHTLCGARMVDFHGWMMPLHYGSQLDEHHAVRTDAGMFDVSHMTIVDLHGSRTREFLRYLLANDVAKLTKTGKALYSGMLNASGGVIDDLIIYYFTEDFFRLVVNSATREKDLSWITQHAEPYAIDITVRDDLSLIAVQGPNAQEKAATLFTDEQRHAVEGMKPFFGVQAGDLFIATTGYTGEAGYEIAMPNEKAADFWRALVEAGVKPCGLGARDTLRLEAGMNLYGQEMDEGISPLAANMGWTIAWEPADRDFIGREALEMQREKGHEQLVGLVMTEKGVLRNELPVRFTDAQGNQQEGIITSGTFSPTLGYSIALARVPAGIGETAIVQIRNREMPVKVTKPVFVRNGKAVA.

It belongs to the GcvT family. In terms of assembly, the glycine cleavage system is composed of four proteins: P, T, L and H.

It carries out the reaction N(6)-[(R)-S(8)-aminomethyldihydrolipoyl]-L-lysyl-[protein] + (6S)-5,6,7,8-tetrahydrofolate = N(6)-[(R)-dihydrolipoyl]-L-lysyl-[protein] + (6R)-5,10-methylene-5,6,7,8-tetrahydrofolate + NH4(+). The glycine cleavage system catalyzes the degradation of glycine. The polypeptide is Aminomethyltransferase (Salmonella dublin (strain CT_02021853)).